The following is an 85-amino-acid chain: RNA-binding protein Hfq (85 aa).

Positions 9-68 constitute a Sm domain; that stretch reads DPFLNELRKEKVPVSVFLVNGIKLHGIIDSFDQYVVMLKNSITQMVYKHAISTVVPSRMV.

This sequence belongs to the Hfq family. As to quaternary structure, homohexamer.

Its function is as follows. RNA chaperone that binds small regulatory RNA (sRNAs) and mRNAs to facilitate mRNA translational regulation in response to envelope stress, environmental stress and changes in metabolite concentrations. Also binds with high specificity to tRNAs. The sequence is that of RNA-binding protein Hfq from Legionella pneumophila (strain Paris).